The following is a 404-amino-acid chain: WD repeat and SOCS box-containing protein 2 (404 aa).

WD repeat units lie at residues 16-55 (GRPH…LIPW), 81-140 (GSPK…IWEV), 144-183 (LLLL…IWDL), 188-226 (KQIQ…LWSM), 230-268 (TLIR…MWDP), 283-322 (DPAM…IWAL), and 325-362 (KTPI…FWTA). Residues 68–87 (AKSRSSKNETKGRGSPKEKT) form a disordered region. The SOCS box domain maps to 356-404 (HVQFWTAPRVLSSLKHLCRKALRSFLTTYQVLALPIPKKMKEFLTYRTF).

Its pathway is protein modification; protein ubiquitination. Its function is as follows. May be a substrate-recognition component of a SCF-like ECS (Elongin-Cullin-SOCS-box protein) E3 ubiquitin ligase complex which mediates the ubiquitination and subsequent proteasomal degradation of target proteins. This chain is WD repeat and SOCS box-containing protein 2 (WSB2), found in Homo sapiens (Human).